The sequence spans 338 residues: L-asparaginase 1 (338 aa).

An Asparaginase/glutaminase domain is found at 4–329 (KSIYVAYTGG…ETIRKAMSQN (326 aa)). Catalysis depends on threonine 14, which acts as the O-isoaspartyl threonine intermediate. Residues 59-61 (DSS) and 91-92 (TD) each bind substrate.

Belongs to the asparaginase 1 family. In terms of assembly, homotetramer.

Its subcellular location is the cytoplasm. The catalysed reaction is L-asparagine + H2O = L-aspartate + NH4(+). The sequence is that of L-asparaginase 1 (ansA) from Escherichia coli O157:H7.